A 567-amino-acid chain; its full sequence is Urease subunit alpha (567 aa).

In terms of domain architecture, Urease spans 129-567 (GGVDTHIHFI…LPMAQRYFLF (439 aa)). The Ni(2+) site is built by His-134, His-136, and Lys-217. The residue at position 217 (Lys-217) is an N6-carboxylysine. His-219 contributes to the substrate binding site. 2 residues coordinate Ni(2+): His-246 and His-272. The active-site Proton donor is the His-320. Residue Asp-360 coordinates Ni(2+).

Belongs to the metallo-dependent hydrolases superfamily. Urease alpha subunit family. In terms of assembly, heterotrimer of UreA (gamma), UreB (beta) and UreC (alpha) subunits. Three heterotrimers associate to form the active enzyme. Ni cation is required as a cofactor. Post-translationally, carboxylation allows a single lysine to coordinate two nickel ions.

Its subcellular location is the cytoplasm. It carries out the reaction urea + 2 H2O + H(+) = hydrogencarbonate + 2 NH4(+). It functions in the pathway nitrogen metabolism; urea degradation; CO(2) and NH(3) from urea (urease route): step 1/1. In Proteus hauseri, this protein is Urease subunit alpha.